Consider the following 955-residue polypeptide: E3 ubiquitin-protein ligase MIB2 (955 aa).

At Met-1 the chain carries N-acetylmethionine. One can recognise an MIB/HERC2 1 domain in the interval 1-80; that stretch reads MDPDPQAGVQ…AHDLLLYDNA (80 aa). The ZZ-type zinc-finger motif lies at 86–138; that stretch reads HPNIICDCCKKHGLRGMRWKCRVCLDYDLCTQCYMHNKHELAHAFDRYETAHS. 8 residues coordinate Zn(2+): Cys-91, Cys-94, Cys-106, Cys-109, Cys-115, Cys-118, His-124, and His-128. Residues 149-227 form the MIB/HERC2 2 domain; it reads LPRIPLRGIF…KVDLKCVGEA (79 aa). Residue Ser-251 is modified to Phosphoserine. ANK repeat units lie at residues 464–493, 497–526, 530–559, 563–595, 599–628, 633–663, 667–696, 700–728, and 769–798; these read QGRT…GVDL, EGNT…RADA, TQST…DVNL, HSDT…DVTA, QGFT…QLVD, DGFT…DVNV, KLQS…SVNA, EGDT…DPGP, and RGRS…ERQA. 2 consecutive RING-type zinc fingers follow at residues 832-867 and 911-944; these read CLVC…IRCQ and CPIC…PICR.

In terms of assembly, interacts with actin monomer. Post-translationally, ubiquitinated. Possibly via autoubiquitination. Expressed in skeletal muscle, and to a lesser extent in heart, brain and kidney.

Its subcellular location is the cytoplasm. The protein localises to the endosome. The catalysed reaction is S-ubiquitinyl-[E2 ubiquitin-conjugating enzyme]-L-cysteine + [acceptor protein]-L-lysine = [E2 ubiquitin-conjugating enzyme]-L-cysteine + N(6)-ubiquitinyl-[acceptor protein]-L-lysine.. It functions in the pathway protein modification; protein ubiquitination. Its function is as follows. E3 ubiquitin-protein ligase that mediates ubiquitination of Delta receptors, which act as ligands of Notch proteins. Positively regulates the Delta-mediated Notch signaling by ubiquitinating the intracellular domain of Delta, leading to endocytosis of Delta receptors. This Homo sapiens (Human) protein is E3 ubiquitin-protein ligase MIB2.